Here is an 80-residue protein sequence, read N- to C-terminus: Small ribosomal subunit protein bS18A (80 aa).

It belongs to the bacterial ribosomal protein bS18 family. As to quaternary structure, part of the 30S ribosomal subunit. Forms a tight heterodimer with protein bS6.

Functionally, binds as a heterodimer with protein bS6 to the central domain of the 16S rRNA, where it helps stabilize the platform of the 30S subunit. The sequence is that of Small ribosomal subunit protein bS18A from Rhodococcus jostii (strain RHA1).